We begin with the raw amino-acid sequence, 248 residues long: tRNA (guanine-N(1)-)-methyltransferase (248 aa).

S-adenosyl-L-methionine is bound by residues glycine 126 and 150–155; that span reads LGDYVL. Residues 224-248 form a disordered region; that stretch reads WRRTQQEERTRERRPDLWAAFDSED. Residues 227–239 are compositionally biased toward basic and acidic residues; it reads TQQEERTRERRPD.

The protein belongs to the RNA methyltransferase TrmD family. As to quaternary structure, homodimer.

The protein resides in the cytoplasm. The catalysed reaction is guanosine(37) in tRNA + S-adenosyl-L-methionine = N(1)-methylguanosine(37) in tRNA + S-adenosyl-L-homocysteine + H(+). Specifically methylates guanosine-37 in various tRNAs. In Micrococcus luteus (strain ATCC 4698 / DSM 20030 / JCM 1464 / CCM 169 / CCUG 5858 / IAM 1056 / NBRC 3333 / NCIMB 9278 / NCTC 2665 / VKM Ac-2230) (Micrococcus lysodeikticus), this protein is tRNA (guanine-N(1)-)-methyltransferase.